We begin with the raw amino-acid sequence, 1485 residues long: Putative E3 ubiquitin-protein ligase LIN-2 (1485 aa).

Residues 337–353 (EENEDDSDSELDNESVD) show a composition bias toward acidic residues. Disordered stretches follow at residues 337 to 363 (EENE…IFSP), 384 to 450 (NQIP…ISNA), and 462 to 507 (RKND…KLSM). A compositionally biased stretch (low complexity) spans 438–450 (SSPDISIDNISNA). Over residues 466–484 (SQTPSMNQDNENSLVLNDS) the composition is skewed to polar residues. The U-box domain maps to 510-585 (KPPKDFVCPI…TSWKEQNPEL (76 aa)). WD repeat units follow at residues 1194-1232 (SCKE…KVCD), 1246-1283 (EHTK…IKCI), 1409-1448 (SLST…RVAS), and 1454-1485 (GHTK…WALD).

The enzyme catalyses S-ubiquitinyl-[E2 ubiquitin-conjugating enzyme]-L-cysteine + [acceptor protein]-L-lysine = [E2 ubiquitin-conjugating enzyme]-L-cysteine + N(6)-ubiquitinyl-[acceptor protein]-L-lysine.. The protein operates within protein modification; protein ubiquitination. In terms of biological role, putative E3 ubiquitin-protein ligase involved in the rhizobial infection process. Plays an important role in the early steps of infection thread formation and in growth and differentiation of nodules. In Lotus japonicus (Lotus corniculatus var. japonicus), this protein is Putative E3 ubiquitin-protein ligase LIN-2.